Reading from the N-terminus, the 160-residue chain is MCHSRNHLHTMTGLRAPSPAPSTGPELRRGSGPEIFTFDPLPERAVVSTARLNTSRGHRKRSRRVLYPRVVRRQLPTEEPNIAKRVLFLLFAIIFCQILMAEEGVSQPLAPEDATSAVTPEPISAPITAPPVLEPLNLTSESSDYALDLKAFLQQHPAAF.

A disordered region spans residues 1 to 35 (MCHSRNHLHTMTGLRAPSPAPSTGPELRRGSGPEI). The Cytoplasmic portion of the chain corresponds to 1 to 85 (MCHSRNHLHT…PTEEPNIAKR (85 aa)). Phosphoserine is present on Ser31. A helical; Signal-anchor for type II membrane protein membrane pass occupies residues 86-102 (VLFLLFAIIFCQILMAE). Over 103 to 153 (EGVSQPLAPEDATSAVTPEPISAPITAPPVLEPLNLTSESSDYALDLKAFL) the chain is Extracellular. Asn137 is a glycosylation site (N-linked (GlcNAc...) asparagine).

Belongs to the IER3 family. In terms of assembly, interacts with the PPP2R5C-PP2A holoenzyme and ERK kinases; regulates ERK dephosphorylation. Glycosylated. Expressed predominantly in the lung, testes and the uterus.

Its subcellular location is the membrane. In terms of biological role, may play a role in the ERK signaling pathway by inhibiting the dephosphorylation of ERK by phosphatase PP2A-PPP2R5C holoenzyme. Also acts as an ERK downstream effector mediating survival. As a member of the NUPR1/RELB/IER3 survival pathway, may allow the development of pancreatic intraepithelial neoplasias. This is Radiation-inducible immediate-early gene IEX-1 (Ier3) from Mus musculus (Mouse).